A 226-amino-acid polypeptide reads, in one-letter code: Phosphoenolpyruvate guanylyltransferase (226 aa).

Phosphoenolpyruvate-binding residues include threonine 145, glycine 161, and serine 164.

It belongs to the CofC family.

The enzyme catalyses phosphoenolpyruvate + GTP + H(+) = enolpyruvoyl-2-diphospho-5'-guanosine + diphosphate. It participates in cofactor biosynthesis; coenzyme F420 biosynthesis. Functionally, guanylyltransferase that catalyzes the activation of phosphoenolpyruvate (PEP) as enolpyruvoyl-2-diphospho-5'-guanosine, via the condensation of PEP with GTP. It is involved in the biosynthesis of coenzyme F420, a hydride carrier cofactor. The polypeptide is Phosphoenolpyruvate guanylyltransferase (Nocardia farcinica (strain IFM 10152)).